The following is a 276-amino-acid chain: Large ribosomal subunit protein uL2 (276 aa).

Positions Met-225–Lys-276 are disordered. Basic residues predominate over residues Lys-258–Lys-276.

This sequence belongs to the universal ribosomal protein uL2 family. As to quaternary structure, part of the 50S ribosomal subunit. Forms a bridge to the 30S subunit in the 70S ribosome.

One of the primary rRNA binding proteins. Required for association of the 30S and 50S subunits to form the 70S ribosome, for tRNA binding and peptide bond formation. It has been suggested to have peptidyltransferase activity; this is somewhat controversial. Makes several contacts with the 16S rRNA in the 70S ribosome. This is Large ribosomal subunit protein uL2 from Moorella thermoacetica (strain ATCC 39073 / JCM 9320).